An 88-amino-acid chain; its full sequence is Cell division topological specificity factor (88 aa).

It belongs to the MinE family.

Prevents the cell division inhibition by proteins MinC and MinD at internal division sites while permitting inhibition at polar sites. This ensures cell division at the proper site by restricting the formation of a division septum at the midpoint of the long axis of the cell. This Methylibium petroleiphilum (strain ATCC BAA-1232 / LMG 22953 / PM1) protein is Cell division topological specificity factor.